Consider the following 344-residue polypeptide: UDP-3-O-acylglucosamine N-acyltransferase (344 aa).

H248 serves as the catalytic Proton acceptor.

It belongs to the transferase hexapeptide repeat family. LpxD subfamily. As to quaternary structure, homotrimer.

The catalysed reaction is a UDP-3-O-[(3R)-3-hydroxyacyl]-alpha-D-glucosamine + a (3R)-hydroxyacyl-[ACP] = a UDP-2-N,3-O-bis[(3R)-3-hydroxyacyl]-alpha-D-glucosamine + holo-[ACP] + H(+). It functions in the pathway bacterial outer membrane biogenesis; LPS lipid A biosynthesis. Its function is as follows. Catalyzes the N-acylation of UDP-3-O-acylglucosamine using 3-hydroxyacyl-ACP as the acyl donor. Is involved in the biosynthesis of lipid A, a phosphorylated glycolipid that anchors the lipopolysaccharide to the outer membrane of the cell. In Synechocystis sp. (strain ATCC 27184 / PCC 6803 / Kazusa), this protein is UDP-3-O-acylglucosamine N-acyltransferase.